Here is a 354-residue protein sequence, read N- to C-terminus: Glutamine synthetase (354 aa).

The region spanning 22–101 (VQAEYVWIDG…VLAETFNNDG (80 aa)) is the GS beta-grasp domain. The GS catalytic domain maps to 108-354 (HRHHTKKVMD…IIVETTVLDK (247 aa)).

This sequence belongs to the glutamine synthetase family. As to quaternary structure, homooctamer.

The protein resides in the cytoplasm. It carries out the reaction L-glutamate + NH4(+) + ATP = L-glutamine + ADP + phosphate + H(+). The sequence is that of Glutamine synthetase (GLNA) from Suillus bovinus (Jersey cow bolete).